The following is a 292-amino-acid chain: Hypersensitive-induced response protein 4 (292 aa).

The N-myristoyl glycine moiety is linked to residue glycine 2.

Self-interacts and forms heteromers. Interacts with NB-LRR class of R proteins before R proteins (e.g. RPS2 or RPM1) are activated by the effectors.

It localises to the cell membrane. This Arabidopsis thaliana (Mouse-ear cress) protein is Hypersensitive-induced response protein 4 (HIR4).